We begin with the raw amino-acid sequence, 1060 residues long: Desmoglein-1-beta (1060 aa).

A signal peptide spans 1–23 (MDWHSFRIAALLLTSLVVLEVNS). A propeptide spanning residues 24-49 (EFQIQVRDHNAKNGTIKWHSIRRQKR) is cleaved from the precursor. Cadherin domains lie at 50–157 (EWIK…PPVF), 158–269 (SMTT…IPYL), 270–389 (EQSS…RPGS), and 386–493 (RPGS…PGSD). Topologically, residues 50-567 (EWIKFAAACR…ITEDNVHFGP (518 aa)) are extracellular. A glycan (N-linked (GlcNAc...) (high mannose) asparagine) is linked at asparagine 110. Asparagine 180 carries an N-linked (GlcNAc...) asparagine glycan. The tract at residues 490-560 (PGSDGGGSSS…PEPEPFDITE (71 aa)) is disordered. Residues 492-503 (SDGGGSSSGSGG) are compositionally biased toward gly residues. Polar residues predominate over residues 510 to 519 (NGYQGTSTVG). Positions 525-537 (GSGGVTSSGGGSG) are enriched in gly residues. Positions 549–560 (DEPEPEPFDITE) are enriched in acidic residues. A helical transmembrane segment spans residues 568–588 (AGIGLLIMGFLVLGLVPFLLI). At 589–1060 (CCDCGGAPGG…TKYSTVQYSK (472 aa)) the chain is on the cytoplasmic side. Residues 792–801 (PDPDSSWPPQ) are compositionally biased toward low complexity. The interval 792–811 (PDPDSSWPPQSTEPMCPQST) is disordered. Desmoglein repeat repeat units follow at residues 835–861 (AYPS…TVRE), 862–891 (SYAT…ERVV), 892–921 (GPVP…ERVI), 922–949 (APGS…ERVI), and 950–978 (QPTS…ERVV).

Interacts with DSC3; there is evidence to suggest that the interaction promotes cell-cell adhesion of keratinocytes. In terms of tissue distribution, expressed in epidermis.

The protein resides in the cell membrane. It is found in the cell junction. The protein localises to the desmosome. Its subcellular location is the cytoplasm. It localises to the nucleus. Its function is as follows. Component of intercellular desmosome junctions. Involved in the interaction of plaque proteins and intermediate filaments mediating cell-cell adhesion. The polypeptide is Desmoglein-1-beta (Dsg1b) (Mus musculus (Mouse)).